Here is a 76-residue protein sequence, read N- to C-terminus: Small proline-rich protein 2I (76 aa).

A run of 3 repeats spans residues 21-29, 30-38, and 39-47. The 3 X 9 AA approximate tandem repeats stretch occupies residues 21-47; that stretch reads KKCPEPCPPPQCPEPCPPPKCPEPCPE. Positions 40-53 are enriched in pro residues; that stretch reads KCPEPCPESCPPPS. Positions 40–76 are disordered; it reads KCPEPCPESCPPPSYQQKCPPVQPPPPCQQKCPPKSK.

It belongs to the cornifin (SPRR) family. In terms of tissue distribution, not expressed in uterus.

It is found in the cytoplasm. In terms of biological role, cross-linked envelope protein of keratinocytes. It is a keratinocyte protein that first appears in the cell cytosol, but ultimately becomes cross-linked to membrane proteins by transglutaminase. All that results in the formation of an insoluble envelope beneath the plasma membrane. The chain is Small proline-rich protein 2I (Sprr2i) from Mus musculus (Mouse).